The sequence spans 229 residues: NAD(P)H-quinone oxidoreductase subunit K, chloroplastic (229 aa).

Residues C43, C44, C108, and C139 each contribute to the [4Fe-4S] cluster site.

It belongs to the complex I 20 kDa subunit family. NDH is composed of at least 16 different subunits, 5 of which are encoded in the nucleus. It depends on [4Fe-4S] cluster as a cofactor.

The protein localises to the plastid. The protein resides in the chloroplast thylakoid membrane. It catalyses the reaction a plastoquinone + NADH + (n+1) H(+)(in) = a plastoquinol + NAD(+) + n H(+)(out). The enzyme catalyses a plastoquinone + NADPH + (n+1) H(+)(in) = a plastoquinol + NADP(+) + n H(+)(out). Its function is as follows. NDH shuttles electrons from NAD(P)H:plastoquinone, via FMN and iron-sulfur (Fe-S) centers, to quinones in the photosynthetic chain and possibly in a chloroplast respiratory chain. The immediate electron acceptor for the enzyme in this species is believed to be plastoquinone. Couples the redox reaction to proton translocation, and thus conserves the redox energy in a proton gradient. This chain is NAD(P)H-quinone oxidoreductase subunit K, chloroplastic, found in Piper cenocladum (Ant piper).